Reading from the N-terminus, the 546-residue chain is MSKDPGRILIFDTTLRDGEQSPGASLNLEEKLAIAHQLARLGVDVIEAGFPFASPGDFKAVNKISNDVGKENGPIICGLARASKGDIKACYEAVSPAPKKRIHTFIATSDIHLKHKLKKSRKDVLQIVPEMVNYAKTLVEDIEFSCEDASRSDPDFLYEVIQLAISAGATTINIPDTVGFTTPSEFGKLISDINKNVPNIDEAVISVHGHNDLGLAVANFLEAVKNGARQLECTINGIGERAGNASLEELVMALHVRKSFFNSFFKRNPDSPTPLTAIRTEEITKTSRLVSNLTGMTVQPNKAIVGANAFAHESGIHQDGVLKNRLTYEIIDAKTVGLSDNKISLGKLSGRSAVRARLEEMGYDLSREDLNDAFARFKDLADRKREITDRDLEAIVSEQVQLPEAKFQLCLVQVSCGNASKPTATITLLNTADNTEDTAVSVGTGPVDAVCEALNKLAKVPNELIEFSVKSVTEGIDALGEVTIRIRRDNKIYSGHSADTDVVVAAANAYVNALNRLVFSEKKNSIHPQFDNLENSNKTFLSNPAN.

The Pyruvate carboxyltransferase domain occupies 8–271 (ILIFDTTLRD…NSFFKRNPDS (264 aa)). Mn(2+) is bound by residues aspartate 17, histidine 208, histidine 210, and asparagine 244. The segment at 408–546 (QLCLVQVSCG…NKTFLSNPAN (139 aa)) is regulatory domain.

Belongs to the alpha-IPM synthase/homocitrate synthase family. LeuA type 1 subfamily. In terms of assembly, homodimer. It depends on Mn(2+) as a cofactor.

Its subcellular location is the cytoplasm. It catalyses the reaction 3-methyl-2-oxobutanoate + acetyl-CoA + H2O = (2S)-2-isopropylmalate + CoA + H(+). It functions in the pathway amino-acid biosynthesis; L-leucine biosynthesis; L-leucine from 3-methyl-2-oxobutanoate: step 1/4. Catalyzes the condensation of the acetyl group of acetyl-CoA with 3-methyl-2-oxobutanoate (2-ketoisovalerate) to form 3-carboxy-3-hydroxy-4-methylpentanoate (2-isopropylmalate). This is 2-isopropylmalate synthase from Prochlorococcus marinus (strain MIT 9312).